Consider the following 426-residue polypeptide: Serine--tRNA ligase (426 aa).

228-230 contributes to the L-serine binding site; sequence TSE. ATP is bound by residues 259 to 261 and Val275; that span reads RRE. Glu282 contributes to the L-serine binding site. Residue 346–349 coordinates ATP; it reads ELTS. Residue Thr386 participates in L-serine binding.

It belongs to the class-II aminoacyl-tRNA synthetase family. Type-1 seryl-tRNA synthetase subfamily. In terms of assembly, homodimer. The tRNA molecule binds across the dimer.

It localises to the cytoplasm. It carries out the reaction tRNA(Ser) + L-serine + ATP = L-seryl-tRNA(Ser) + AMP + diphosphate + H(+). The enzyme catalyses tRNA(Sec) + L-serine + ATP = L-seryl-tRNA(Sec) + AMP + diphosphate + H(+). The protein operates within aminoacyl-tRNA biosynthesis; selenocysteinyl-tRNA(Sec) biosynthesis; L-seryl-tRNA(Sec) from L-serine and tRNA(Sec): step 1/1. In terms of biological role, catalyzes the attachment of serine to tRNA(Ser). Is also able to aminoacylate tRNA(Sec) with serine, to form the misacylated tRNA L-seryl-tRNA(Sec), which will be further converted into selenocysteinyl-tRNA(Sec). In Arthrobacter sp. (strain FB24), this protein is Serine--tRNA ligase.